The chain runs to 227 residues: ATP-dependent dethiobiotin synthetase BioD (227 aa).

13 to 18 (DIGKTY) provides a ligand contact to ATP. Mg(2+) is bound at residue T17. K38 is a catalytic residue. Substrate is bound at residue S42. ATP is bound by residues D55, 116-119 (EGSG), and 179-180 (NN). D55 and E116 together coordinate Mg(2+).

Belongs to the dethiobiotin synthetase family. In terms of assembly, homodimer. Requires Mg(2+) as cofactor.

It is found in the cytoplasm. The enzyme catalyses (7R,8S)-7,8-diammoniononanoate + CO2 + ATP = (4R,5S)-dethiobiotin + ADP + phosphate + 3 H(+). It functions in the pathway cofactor biosynthesis; biotin biosynthesis; biotin from 7,8-diaminononanoate: step 1/2. In terms of biological role, catalyzes a mechanistically unusual reaction, the ATP-dependent insertion of CO2 between the N7 and N8 nitrogen atoms of 7,8-diaminopelargonic acid (DAPA, also called 7,8-diammoniononanoate) to form a ureido ring. This chain is ATP-dependent dethiobiotin synthetase BioD, found in Clostridium botulinum (strain Eklund 17B / Type B).